A 430-amino-acid polypeptide reads, in one-letter code: MGKNVVVLGTQWGDEGKGKIVDLLTEQAAAVVRYQGGHNAGHTLVIDGEKTVLHLIPSGILREGVQCLIGNGVVLAPDALLREITKLEEKGVPVRERLRISPSCPLILSYHVALDQAREKARGEAKIGTTGRGIGPAYEDKVARRGLRVGDLFHRERFAAKLGELLDYHNFVLQHYYKEPAIDFQKTLDEAMEYAELLKPMMADVAATLHDLRKHGKDIMFEGAQGSLLDIDHGTYPYVTSSNTTAGGTATGSGFGPLYLDYVLGITKAYTTRVGSGPFPTELFDDVGAYLAKRGHEFGATTGRARRCGWFDAVILRRAIEINSISGLCLTKLDVLDGLDVVRLCVGYKNADGDVLEAPTDADSYIGLQPVYEEMPGWSESTVGAKTLEELPANARAYIKRVEELVGAPIDIISTGPDRNETIILRHPFA.

GTP-binding positions include 13 to 19 (GDEGKGK) and 41 to 43 (GHT). Catalysis depends on D14, which acts as the Proton acceptor. Residues D14 and G41 each contribute to the Mg(2+) site. IMP contacts are provided by residues 14–17 (DEGK), 39–42 (NAGH), T130, R144, Q225, T240, and R304. H42 serves as the catalytic Proton donor. Substrate is bound at residue 300–306 (ATTGRAR). GTP contacts are provided by residues R306, 332–334 (KLD), and 414–416 (STG).

This sequence belongs to the adenylosuccinate synthetase family. Homodimer. Requires Mg(2+) as cofactor.

The protein localises to the cytoplasm. The enzyme catalyses IMP + L-aspartate + GTP = N(6)-(1,2-dicarboxyethyl)-AMP + GDP + phosphate + 2 H(+). It participates in purine metabolism; AMP biosynthesis via de novo pathway; AMP from IMP: step 1/2. Its function is as follows. Plays an important role in the de novo pathway of purine nucleotide biosynthesis. Catalyzes the first committed step in the biosynthesis of AMP from IMP. The sequence is that of Adenylosuccinate synthetase from Pseudomonas aeruginosa (strain LESB58).